The following is a 438-amino-acid chain: UDP-N-acetylmuramoylalanine--D-glutamate ligase (438 aa).

ATP is bound at residue 105-111 (GSNGKTT).

This sequence belongs to the MurCDEF family.

The protein localises to the cytoplasm. The enzyme catalyses UDP-N-acetyl-alpha-D-muramoyl-L-alanine + D-glutamate + ATP = UDP-N-acetyl-alpha-D-muramoyl-L-alanyl-D-glutamate + ADP + phosphate + H(+). The protein operates within cell wall biogenesis; peptidoglycan biosynthesis. Cell wall formation. Catalyzes the addition of glutamate to the nucleotide precursor UDP-N-acetylmuramoyl-L-alanine (UMA). This is UDP-N-acetylmuramoylalanine--D-glutamate ligase from Oenococcus oeni (strain ATCC BAA-331 / PSU-1).